Here is a 382-residue protein sequence, read N- to C-terminus: Mannitol-1-phosphate 5-dehydrogenase (382 aa).

An NAD(+)-binding site is contributed by 3 to 14 (ALHFGAGNIGRG).

It belongs to the mannitol dehydrogenase family.

The enzyme catalyses D-mannitol 1-phosphate + NAD(+) = beta-D-fructose 6-phosphate + NADH + H(+). This is Mannitol-1-phosphate 5-dehydrogenase from Tolumonas auensis (strain DSM 9187 / NBRC 110442 / TA 4).